The primary structure comprises 278 residues: Esterase dbaE (278 aa).

Catalysis depends on charge relay system residues S124, D220, and H248.

It belongs to the LovG family.

The protein operates within secondary metabolite biosynthesis. Its function is as follows. Esterase; part of the gene cluster that mediates the biosynthesis of the antibiotic 2,4-dihydroxy-3-methyl-6-(2-oxopropyl)benzaldehyde (DHMBA) and its derivatives. The direct non-reducing polyketide synthase dbaI product is 2,4-dihydroxy-3-methyl-6-(2-oxopropyl)benzaldehyde (DHMBA), produced by condensation of one acetyl-CoA starter unit with 4 malonyl-CoA units and one methylation step. The FAD-dependent monooxygenase dbaH is responsible for the synthesis of yellow pigments derived from the oxidation of DHMBA. The roles of dbaB, C, E and F have still to be determined. The chain is Esterase dbaE from Emericella nidulans (strain FGSC A4 / ATCC 38163 / CBS 112.46 / NRRL 194 / M139) (Aspergillus nidulans).